A 179-amino-acid polypeptide reads, in one-letter code: Replication restart protein DnaT (179 aa).

A disordered region spans residues 151-179 (SRASNGGQPKRDVNSVSEPDSHIPRGFRG). Positions 159–173 (PKRDVNSVSEPDSHI) are enriched in basic and acidic residues.

It belongs to the DnaT family. As to quaternary structure, homooligomerizes. Interacts with PriB. Component of the replication restart primosome. Primosome assembly occurs via a 'hand-off' mechanism. PriA binds to replication forks, subsequently PriB then DnaT bind; DnaT then displaces ssDNA to generate the helicase loading substrate.

In terms of biological role, involved in the restart of stalled replication forks, which reloads the replicative helicase on sites other than the origin of replication. Can function in multiple replication restart pathways. Displaces ssDNA from a PriB-ssDNA complex. Probably forms a spiral filament on ssDNA. The chain is Replication restart protein DnaT from Klebsiella pneumoniae (strain 342).